The primary structure comprises 396 residues: ATP phosphoribosyltransferase regulatory subunit (396 aa).

It belongs to the class-II aminoacyl-tRNA synthetase family. HisZ subfamily. Heteromultimer composed of HisG and HisZ subunits.

The protein resides in the cytoplasm. It functions in the pathway amino-acid biosynthesis; L-histidine biosynthesis; L-histidine from 5-phospho-alpha-D-ribose 1-diphosphate: step 1/9. In terms of biological role, required for the first step of histidine biosynthesis. May allow the feedback regulation of ATP phosphoribosyltransferase activity by histidine. The sequence is that of ATP phosphoribosyltransferase regulatory subunit from Alkaliphilus metalliredigens (strain QYMF).